The sequence spans 368 residues: ATP-dependent (S)-NAD(P)H-hydrate dehydratase (368 aa).

Positions 3 to 359 (SPSKKLLANV…DEVHGSFLDL (357 aa)) constitute a YjeF C-terminal domain. Residues Gly120 and 173–179 (NVVEFAR) each bind (6S)-NADPHX. Residues 217–221 (KGPHD) and 236–245 (GGLKRSGGQG) contribute to the ATP site. A (6S)-NADPHX-binding site is contributed by Asp246.

It belongs to the NnrD/CARKD family. The cofactor is Mg(2+).

Its subcellular location is the cytoplasm. The catalysed reaction is (6S)-NADHX + ATP = ADP + phosphate + NADH + H(+). It carries out the reaction (6S)-NADPHX + ATP = ADP + phosphate + NADPH + H(+). Functionally, catalyzes the dehydration of the S-form of NAD(P)HX at the expense of ATP, which is converted to ADP. Together with NAD(P)HX epimerase, which catalyzes the epimerization of the S- and R-forms, the enzyme allows the repair of both epimers of NAD(P)HX, a damaged form of NAD(P)H that is a result of enzymatic or heat-dependent hydration. In Ajellomyces capsulatus (strain G186AR / H82 / ATCC MYA-2454 / RMSCC 2432) (Darling's disease fungus), this protein is ATP-dependent (S)-NAD(P)H-hydrate dehydratase.